The sequence spans 261 residues: uncharacterized protein (261 aa).

This sequence belongs to the BtpA family.

This is an uncharacterized protein from Methanocaldococcus jannaschii (strain ATCC 43067 / DSM 2661 / JAL-1 / JCM 10045 / NBRC 100440) (Methanococcus jannaschii).